Here is a 190-residue protein sequence, read N- to C-terminus: Prostaglandin-H2 D-isomerase (190 aa).

Residues 1–22 (MATHHTLWMGLVLLGLLGGLQA) form the signal peptide. N51 is a glycosylation site (N-linked (GlcNAc...) asparagine). Catalysis depends on C65, which acts as the Nucleophile. N78 is a glycosylation site (N-linked (GlcNAc...) asparagine). C89 and C186 are oxidised to a cystine.

It belongs to the calycin superfamily. Lipocalin family. Monomer.

It localises to the rough endoplasmic reticulum. The protein resides in the nucleus membrane. The protein localises to the golgi apparatus. Its subcellular location is the cytoplasm. It is found in the perinuclear region. It localises to the secreted. The enzyme catalyses prostaglandin H2 = prostaglandin D2. In terms of biological role, catalyzes the conversion of PGH2 to PGD2, a prostaglandin involved in smooth muscle contraction/relaxation and a potent inhibitor of platelet aggregation. Involved in a variety of CNS functions, such as sedation, NREM sleep and PGE2-induced allodynia, and may have an anti-apoptotic role in oligodendrocytes. Binds small non-substrate lipophilic molecules, including biliverdin, bilirubin, retinal, retinoic acid and thyroid hormone, and may act as a scavenger for harmful hydrophobic molecules and as a secretory retinoid and thyroid hormone transporter. Possibly involved in development and maintenance of the blood-brain, blood-retina, blood-aqueous humor and blood-testis barrier. It is likely to play important roles in both maturation and maintenance of the central nervous system and male reproductive system. Involved in PLA2G3-dependent maturation of mast cells. PLA2G3 is secreted by immature mast cells and acts on nearby fibroblasts upstream to PTDGS to synthesize PGD2, which in turn promotes mast cell maturation and degranulation via PTGDR. This chain is Prostaglandin-H2 D-isomerase (PTGDS), found in Macaca fuscata fuscata (Japanese macaque).